A 570-amino-acid polypeptide reads, in one-letter code: Pre-mRNA 3'-end-processing factor FIP1 (570 aa).

Residues 1–10 (MSAEEADKTT) show a composition bias toward basic and acidic residues. The disordered stretch occupies residues 1-107 (MSAEEADKTT…SDDDDDDVRV (107 aa)). The span at 16 to 38 (AGDEEEEWLYGDEGESKETEEEE) shows a compositional bias: acidic residues. Residues 56–77 (DAPTTTNNSSDSATPPTTTTTT) show a composition bias toward low complexity. Over residues 87–104 (APGEDEDSESDSDDDDDD) the composition is skewed to acidic residues. Threonine 125 carries the phosphothreonine modification. Serine 247 is subject to Phosphoserine. Disordered regions lie at residues 300–328 (RRRHNLEGNNIQVISEHSSSEVEPEVQKM), 371–400 (PNFPPPTGGPPPSLIPTLDNSGHPGGYDGR), and 418–570 (GAVN…EAME). Pro residues predominate over residues 371 to 384 (PNFPPPTGGPPPSL). Composition is skewed to basic and acidic residues over residues 436-462 (YPRRDKEREKERERERQRDRGHERDHS) and 476-506 (DEERYRSYRDYGDRGYERHRERASREKEERH). Composition is skewed to basic residues over residues 520–529 (KSSRSSSRRR) and 538–548 (HRRHKHKKSKR). Residues 549–562 (SKEGKEPSEERSAD) show a composition bias toward basic and acidic residues.

This sequence belongs to the FIP1 family.

The protein resides in the nucleus. Functionally, involved in mRNA processing. The polypeptide is Pre-mRNA 3'-end-processing factor FIP1 (fip1l1) (Danio rerio (Zebrafish)).